Here is a 98-residue protein sequence, read N- to C-terminus: NADH-ubiquinone oxidoreductase chain 4L (98 aa).

3 helical membrane passes run 1–21 (MSLT…GLLM), 29–49 (SLLC…MTIL), and 61–81 (IILL…LVMV).

Belongs to the complex I subunit 4L family. In terms of assembly, core subunit of respiratory chain NADH dehydrogenase (Complex I) which is composed of 45 different subunits.

It localises to the mitochondrion inner membrane. The enzyme catalyses a ubiquinone + NADH + 5 H(+)(in) = a ubiquinol + NAD(+) + 4 H(+)(out). Functionally, core subunit of the mitochondrial membrane respiratory chain NADH dehydrogenase (Complex I) which catalyzes electron transfer from NADH through the respiratory chain, using ubiquinone as an electron acceptor. Part of the enzyme membrane arm which is embedded in the lipid bilayer and involved in proton translocation. In Chiroderma trinitatum (Little big-eyed bat), this protein is NADH-ubiquinone oxidoreductase chain 4L (MT-ND4L).